The primary structure comprises 173 residues: dCTP deaminase, dUMP-forming (173 aa).

DCTP contacts are provided by residues 93–98 (RSSTGR), Asp-111, 119–121 (TLE), Gln-138, and Tyr-151. Catalysis depends on Glu-121, which acts as the Proton donor/acceptor.

This sequence belongs to the dCTP deaminase family. In terms of assembly, homotrimer.

The catalysed reaction is dCTP + 2 H2O = dUMP + NH4(+) + diphosphate. It participates in pyrimidine metabolism; dUMP biosynthesis; dUMP from dCTP: step 1/1. Functionally, bifunctional enzyme that catalyzes both the deamination of dCTP to dUTP and the hydrolysis of dUTP to dUMP without releasing the toxic dUTP intermediate. The sequence is that of dCTP deaminase, dUMP-forming from Clostridium botulinum (strain Alaska E43 / Type E3).